The chain runs to 633 residues: Probable extracellular metalloproteinase 3 (633 aa).

Residues 1 to 18 (MHGLLLAGLLALPMNVLA) form the signal peptide. Positions 19–246 (HPAEQHASNV…VHNVVDYVAS (228 aa)) are excised as a propeptide. Asn-410 is a glycosylation site (N-linked (GlcNAc...) asparagine). His-429 is a Zn(2+) binding site. The active site involves Glu-430. His-433 is a binding site for Zn(2+). Asn-480 and Asn-622 each carry an N-linked (GlcNAc...) asparagine glycan.

The protein belongs to the peptidase M36 family. It depends on Zn(2+) as a cofactor.

Its subcellular location is the secreted. Its function is as follows. Secreted metalloproteinase probably acting as a virulence factor. In Trichophyton verrucosum (strain HKI 0517), this protein is Probable extracellular metalloproteinase 3 (MEP3).